A 210-amino-acid chain; its full sequence is Urease accessory protein UreG (210 aa).

14-21 lines the GTP pocket; the sequence is GPVGSGKT.

The protein belongs to the SIMIBI class G3E GTPase family. UreG subfamily. Homodimer. UreD, UreF and UreG form a complex that acts as a GTP-hydrolysis-dependent molecular chaperone, activating the urease apoprotein by helping to assemble the nickel containing metallocenter of UreC. The UreE protein probably delivers the nickel.

The protein localises to the cytoplasm. In terms of biological role, facilitates the functional incorporation of the urease nickel metallocenter. This process requires GTP hydrolysis, probably effectuated by UreG. This Rhodopseudomonas palustris (strain BisA53) protein is Urease accessory protein UreG.